Consider the following 250-residue polypeptide: Indole-3-glycerol phosphate synthase (250 aa).

It belongs to the TrpC family.

It catalyses the reaction 1-(2-carboxyphenylamino)-1-deoxy-D-ribulose 5-phosphate + H(+) = (1S,2R)-1-C-(indol-3-yl)glycerol 3-phosphate + CO2 + H2O. Its pathway is amino-acid biosynthesis; L-tryptophan biosynthesis; L-tryptophan from chorismate: step 4/5. The polypeptide is Indole-3-glycerol phosphate synthase (Bacillus velezensis (strain DSM 23117 / BGSC 10A6 / LMG 26770 / FZB42) (Bacillus amyloliquefaciens subsp. plantarum)).